The sequence spans 199 residues: Guanylate kinase (199 aa).

The 179-residue stretch at 20-198 folds into the Guanylate kinase-like domain; sequence GKLIILTGPS…ALQAIEVALF (179 aa). 27–34 contacts ATP; the sequence is GPSGVGKG.

The protein belongs to the guanylate kinase family.

The protein resides in the cytoplasm. The catalysed reaction is GMP + ATP = GDP + ADP. Essential for recycling GMP and indirectly, cGMP. The chain is Guanylate kinase from Nostoc sp. (strain PCC 7120 / SAG 25.82 / UTEX 2576).